Reading from the N-terminus, the 262-residue chain is Cytochrome c oxidase subunit 3 (262 aa).

Transmembrane regions (helical) follow at residues 39–59 (YDIS…YQWW), 83–103 (GMIL…WAFF), 120–140 (MGII…ILLA), 163–183 (GLFF…YEYI), 201–221 (ATGF…VCLL), and 240–260 (AWYW…IYWW).

It belongs to the cytochrome c oxidase subunit 3 family. In terms of assembly, component of the cytochrome c oxidase (complex IV, CIV), a multisubunit enzyme composed of a catalytic core of 3 subunits and several supernumerary subunits. The complex exists as a monomer or a dimer and forms supercomplexes (SCs) in the inner mitochondrial membrane with ubiquinol-cytochrome c oxidoreductase (cytochrome b-c1 complex, complex III, CIII).

The protein localises to the mitochondrion inner membrane. The enzyme catalyses 4 Fe(II)-[cytochrome c] + O2 + 8 H(+)(in) = 4 Fe(III)-[cytochrome c] + 2 H2O + 4 H(+)(out). In terms of biological role, component of the cytochrome c oxidase, the last enzyme in the mitochondrial electron transport chain which drives oxidative phosphorylation. The respiratory chain contains 3 multisubunit complexes succinate dehydrogenase (complex II, CII), ubiquinol-cytochrome c oxidoreductase (cytochrome b-c1 complex, complex III, CIII) and cytochrome c oxidase (complex IV, CIV), that cooperate to transfer electrons derived from NADH and succinate to molecular oxygen, creating an electrochemical gradient over the inner membrane that drives transmembrane transport and the ATP synthase. Cytochrome c oxidase is the component of the respiratory chain that catalyzes the reduction of oxygen to water. Electrons originating from reduced cytochrome c in the intermembrane space (IMS) are transferred via the dinuclear copper A center (CU(A)) of subunit 2 and heme A of subunit 1 to the active site in subunit 1, a binuclear center (BNC) formed by heme A3 and copper B (CU(B)). The BNC reduces molecular oxygen to 2 water molecules using 4 electrons from cytochrome c in the IMS and 4 protons from the mitochondrial matrix. The polypeptide is Cytochrome c oxidase subunit 3 (mt:CoIII) (Drosophila yakuba (Fruit fly)).